The sequence spans 210 residues: Putative O-methyltransferase MSMEG_5073/MSMEI_4947 (210 aa).

S-adenosyl-L-methionine contacts are provided by residues valine 37, glutamate 59, 61-62, serine 67, aspartate 85, and valine 86; that span reads GT. Aspartate 133 is a substrate binding site. Aspartate 135 is an S-adenosyl-L-methionine binding site.

It belongs to the class I-like SAM-binding methyltransferase superfamily. Cation-dependent O-methyltransferase family.

The sequence is that of Putative O-methyltransferase MSMEG_5073/MSMEI_4947 from Mycolicibacterium smegmatis (strain ATCC 700084 / mc(2)155) (Mycobacterium smegmatis).